Reading from the N-terminus, the 733-residue chain is Methylmalonyl-CoA mutase large subunit (733 aa).

The segment covering 1–10 (MRIPEFDDIE) has biased composition (acidic residues). Residues 1-22 (MRIPEFDDIELGAGGGPSGSAE) are disordered. Residues Tyr78, Met81, Thr88, Arg90, Tyr92, and Ser117 each coordinate (R)-methylmalonyl-CoA. The cob(II)alamin site is built by Phe120 and Ala142. (R)-methylmalonyl-CoA is bound by residues Thr198 and Gln200. Positions 209 and 210 each coordinate cob(II)alamin. Arg210, His247, Arg286, and Ser288 together coordinate (R)-methylmalonyl-CoA. Residues Gly336, Glu373, Ala376, Gly612, His613, Asp614, Arg615, Ser658, Leu660, Gly689, and Thr712 each contribute to the cob(II)alamin site. One can recognise a B12-binding domain in the interval 600 to 732 (RPRILVAKMG…KRLAADLGHE (133 aa)).

It belongs to the methylmalonyl-CoA mutase family. Heterodimer of an alpha and a beta chain. The cofactor is adenosylcob(III)alamin.

It carries out the reaction (R)-methylmalonyl-CoA = succinyl-CoA. Catalyzes the isomerization of succinyl-CoA to methylmalonyl-CoA during synthesis of propionate from tricarboxylic acid-cycle intermediates. This conversion most likely represents an important source of building blocks for polyketide antibiotic biosynthesis. It is unable to catalyze the conversion of isobutyryl-CoA into N-butyryl-CoA. The polypeptide is Methylmalonyl-CoA mutase large subunit (mutB) (Streptomyces virginiae (Streptomyces cinnamonensis)).